A 353-amino-acid chain; its full sequence is UPF0283 membrane protein KPK_3110 (353 aa).

3 helical membrane passes run 70-90, 99-119, and 213-233; these read MVSA…VQWT, WIAL…VGSV, and ESTL…FIAW.

Belongs to the UPF0283 family.

The protein resides in the cell inner membrane. The sequence is that of UPF0283 membrane protein KPK_3110 from Klebsiella pneumoniae (strain 342).